The primary structure comprises 580 residues: 2-succinyl-5-enolpyruvyl-6-hydroxy-3-cyclohexene-1-carboxylate synthase (580 aa).

This sequence belongs to the TPP enzyme family. MenD subfamily. Homodimer. Requires Mg(2+) as cofactor. It depends on Mn(2+) as a cofactor. Thiamine diphosphate serves as cofactor.

The catalysed reaction is isochorismate + 2-oxoglutarate + H(+) = 5-enolpyruvoyl-6-hydroxy-2-succinyl-cyclohex-3-ene-1-carboxylate + CO2. The protein operates within quinol/quinone metabolism; 1,4-dihydroxy-2-naphthoate biosynthesis; 1,4-dihydroxy-2-naphthoate from chorismate: step 2/7. Its pathway is quinol/quinone metabolism; menaquinone biosynthesis. Catalyzes the thiamine diphosphate-dependent decarboxylation of 2-oxoglutarate and the subsequent addition of the resulting succinic semialdehyde-thiamine pyrophosphate anion to isochorismate to yield 2-succinyl-5-enolpyruvyl-6-hydroxy-3-cyclohexene-1-carboxylate (SEPHCHC). This Bacillus pumilus (strain SAFR-032) protein is 2-succinyl-5-enolpyruvyl-6-hydroxy-3-cyclohexene-1-carboxylate synthase.